The following is a 278-amino-acid chain: Shikimate dehydrogenase (NADP(+)) (278 aa).

Residues 18 to 20 (SRS) and T65 each bind shikimate. The active-site Proton acceptor is K69. Residue E80 coordinates NADP(+). Residues N89 and D104 each coordinate shikimate. Residues 129-133 (GAGGS) and L218 each bind NADP(+). Y220 lines the shikimate pocket. G241 contacts NADP(+).

This sequence belongs to the shikimate dehydrogenase family. As to quaternary structure, homodimer.

It catalyses the reaction shikimate + NADP(+) = 3-dehydroshikimate + NADPH + H(+). The protein operates within metabolic intermediate biosynthesis; chorismate biosynthesis; chorismate from D-erythrose 4-phosphate and phosphoenolpyruvate: step 4/7. Functionally, involved in the biosynthesis of the chorismate, which leads to the biosynthesis of aromatic amino acids. Catalyzes the reversible NADPH linked reduction of 3-dehydroshikimate (DHSA) to yield shikimate (SA). This Rhodopseudomonas palustris (strain ATCC BAA-98 / CGA009) protein is Shikimate dehydrogenase (NADP(+)).